We begin with the raw amino-acid sequence, 30 residues long: Matrix Gla protein (30 aa).

3 positions are modified to phosphoserine: Ser2, Ser3, and Ser5.

Belongs to the osteocalcin/matrix Gla protein family. Requires vitamin K-dependent gamma-carboxylation for its function.

The protein localises to the secreted. Associates with the organic matrix of calcified cartilage. This is Matrix Gla protein (mgp) from Prionace glauca (Blue shark).